We begin with the raw amino-acid sequence, 157 residues long: Protein Smg (157 aa).

The protein belongs to the Smg family.

This chain is Protein Smg, found in Escherichia coli O139:H28 (strain E24377A / ETEC).